A 440-amino-acid chain; its full sequence is COP9 signalosome complex subunit 5 (440 aa).

The region spanning 71 to 218 (VLISKLSCEK…MGAFRTIESK (148 aa)) is the MPN domain. Zn(2+) is bound by residues His164, His166, and Asp177. A JAMM motif motif is present at residues 164-177 (HSHPGYDCWLSNID). The segment covering 319–341 (TQRGDSTETSSFGSMFSGDNTSD) has biased composition (polar residues). Disordered stretches follow at residues 319-343 (TQRG…SDVD) and 375-399 (SSRS…CHDE).

Belongs to the peptidase M67A family. CSN5 subfamily. As to quaternary structure, component of a COP9 signalosome-like (CSN) complex, composed of at least RRI1/CSN5, CSN9, RRI2/CSN10, PCI8/CSN11, CSN12 and CSI1. Within this complex it probably interacts directly with CSN12. Also interacts with RPN5. A divalent metal cation serves as cofactor.

The protein localises to the cytoplasm. The protein resides in the nucleus. In terms of biological role, catalytic component of the COP9 signalosome (CSN) complex that acts as an regulator of the ubiquitin (Ubl) conjugation pathway by mediating the deneddylation of the cullin subunit of SCF-type E3 ubiquitin-protein ligase complexes. The CSN complex is involved in the regulation of the mating pheromone response. This chain is COP9 signalosome complex subunit 5 (RRI1), found in Saccharomyces cerevisiae (strain ATCC 204508 / S288c) (Baker's yeast).